The sequence spans 405 residues: MPAELRRLAVLLLLLSARAALAQPWRNENYERPVDLEGSGDDDPFGDDELDDIYSGSGSGYFEQESGLETAVSLTTDTSVPLPTTVAVLPVTLVQPMATPFELFPTEDTSPEQTTSVLYIPKITEAPVIPSWKTTTASTTASDSPSTTSTTTTTAATTTTTTTTISTTVATSKPTTTQRFLPPFVTKAATTRATTLETPTTSIPETSVLTEVTTSRLVPSSTAKPRSLPKPSTSRTAEPTEKSTALPSSPTTLPPTEAPQVEPGELTTVLDSDLEVPTSSGPSGDFEIQEEEETTRPELGNEVVAVVTPPAAPGLGKNAEPGLIDNTIESGSSAAQLPQKNILERKEVLIAVIVGGVVGALFAAFLVMLLIYRMKKKDEGSYTLEEPKQANVTYQKPDKQEEFYA.

The first 22 residues, 1-22 (MPAELRRLAVLLLLLSARAALA), serve as a signal peptide directing secretion. At 23–347 (QPWRNENYER…PQKNILERKE (325 aa)) the chain is on the extracellular side. The interval 31–59 (ERPVDLEGSGDDDPFGDDELDDIYSGSGS) is disordered. Positions 38–52 (GSGDDDPFGDDELDD) are enriched in acidic residues. 5 O-linked (Xyl...) (glycosaminoglycan) serine glycosylation sites follow: Ser-39, Ser-55, Ser-57, Ser-59, and Ser-66. Disordered regions lie at residues 134–159 (TTTA…ATTT) and 191–301 (TRAT…ELGN). Positions 191-201 (TRATTLETPTT) are enriched in low complexity. The span at 202 to 237 (SIPETSVLTEVTTSRLVPSSTAKPRSLPKPSTSRTA) shows a compositional bias: polar residues. Residues Ser-280, Ser-283, and Ser-330 are each glycosylated (O-linked (Xyl...) (glycosaminoglycan) serine). The chain crosses the membrane as a helical span at residues 348 to 372 (VLIAVIVGGVVGALFAAFLVMLLIY). The Cytoplasmic portion of the chain corresponds to 373–405 (RMKKKDEGSYTLEEPKQANVTYQKPDKQEEFYA).

Belongs to the syndecan proteoglycan family. Post-translationally, O-glycosylated within the Thr/Ser-rich region which could interact with lectin domains on other molecules. In terms of tissue distribution, proximal chondrogenic central core of embryonic limb buds where cartilage differentiation is being initiated.

Its subcellular location is the membrane. Its function is as follows. Cell surface proteoglycan that may bear both heparan sulfate and chondroitin sulfate. The multiple functional domains provide potential sites for mediating the adhesive cell-matrix interactions and cytoskeletal reorganization involved in limb chondrogenesis. Interaction with other matrix ligands as well as phosphorylation and shedding of the ectodomain might be involved in cell shape changes that occur during chondrogenesis. Furthermore, shedding of the ectodomain might break the adhesive interactions that promoted condensation, thus facilitating the deposition of cartilage matrix molecules. This Gallus gallus (Chicken) protein is Syndecan-3 (SDC3).